An 82-amino-acid polypeptide reads, in one-letter code: Translational regulator CsrA (82 aa).

This sequence belongs to the CsrA/RsmA family. As to quaternary structure, homodimer; the beta-strands of each monomer intercalate to form a hydrophobic core, while the alpha-helices form wings that extend away from the core.

It localises to the cytoplasm. In terms of biological role, a translational regulator that binds mRNA to regulate translation initiation and/or mRNA stability. Usually binds in the 5'-UTR at or near the Shine-Dalgarno sequence preventing ribosome-binding, thus repressing translation. Its main target seems to be the major flagellin gene, while its function is anatagonized by FliW. This Geobacillus kaustophilus (strain HTA426) protein is Translational regulator CsrA.